The sequence spans 235 residues: REF/SRPP-like protein At2g47780 (235 aa).

Acidic residues predominate over residues 1-12 (MAEDEIVVEEEQ). The tract at residues 1–32 (MAEDEIVVEEEQSQPQEITPVPPSSSSSPSLV) is disordered.

The protein belongs to the REF/SRPP family.

This chain is REF/SRPP-like protein At2g47780, found in Arabidopsis thaliana (Mouse-ear cress).